A 433-amino-acid chain; its full sequence is Pyroglutamylated RF-amide peptide receptor (433 aa).

The Extracellular segment spans residues 1–46 (MQALNITAEQFSRLLSAHNLTREQFIHRYGLRPLVYTPELPARAKL). N-linked (GlcNAc...) asparagine glycosylation is found at N5 and N19. The chain crosses the membrane as a helical span at residues 47–67 (AFALAGALIFALALFGNSLVI). The Cytoplasmic portion of the chain corresponds to 68-81 (YVVTRSKAMRTVTN). A helical membrane pass occupies residues 82-102 (IFICSLALSDLLIAFFCIPVT). Topologically, residues 103-120 (MLQNISDKWLGGAFICKM) are extracellular. The helical transmembrane segment at 121-141 (VPFVQSTAVVTEILTMTCIAV) threads the bilayer. Topologically, residues 142-162 (ERHQGLIHPFKMKWQYTTRRA) are cytoplasmic. Residues 163–183 (FTILGVVWLAAIIVGSPMWHV) traverse the membrane as a helical segment. Residues 184 to 212 (QRLEIKYDFLYEKEHVCCLEEWASPMHQR) lie on the Extracellular side of the membrane. A helical transmembrane segment spans residues 213–233 (IYTTFILVILFLLPLVVMLVL). The Cytoplasmic portion of the chain corresponds to 234-271 (YSKIGYELWIKKRVGDSSALQTIHGKEMSKIARKKKRA). The helical transmembrane segment at 272-292 (VVMMVTVVALFAACWAPFHVV) threads the bilayer. At 293 to 313 (HMMVEYSNFEKEYDDVTIKMV) the chain is on the extracellular side. Residues 314-334 (FAVAQTIGFFNSICNPFVYAF) form a helical membrane-spanning segment. Residues 335-433 (MNENFKKNFL…NSTFGSGHEL (99 aa)) are Cytoplasmic-facing.

It belongs to the G-protein coupled receptor 1 family. In terms of tissue distribution, expressed widely in the brain with high levels in the cortex and hypothalamus, and moderate levels in the brain stem, caudate nucleus, midbrain hippocampus, thalamus, trigeminal ganglia and spinal cord. Particularly strong expression detected in the mitral cell layer of the olfactory bulb, accessory olfactory bulb, island of Calleja and nucleus of the solitary tract. In peripheral tissues, expressed at moderate levels in the eye, liver, kidney, pituitary gland, testis and thymus.

It is found in the cell membrane. In terms of biological role, receptor for the orexigenic neuropeptide QRFP. The activity of this receptor is mediated by G proteins that modulate adenylate cyclase activity and intracellular calcium levels. The protein is Pyroglutamylated RF-amide peptide receptor (Qrfpr) of Mus musculus (Mouse).